The sequence spans 94 residues: Neutrophil antibiotic peptide NP-2 (94 aa).

Residues 1–19 (MRTLTLLTALLLLALHTQA) form the signal peptide. Positions 20-62 (KSPQGTAEEAPDQEQLVMEDQDISISFGGDKGTALQDADVKAG) are excised as a propeptide. 3 cysteine pairs are disulfide-bonded: Cys65–Cys93, Cys67–Cys82, and Cys72–Cys92.

Belongs to the alpha-defensin family. Highest expression in bone marrow and to a much lesser extent in small intestine.

It is found in the secreted. In terms of biological role, active in vitro against S.aureus, fungi, Gram-positive and Gram-negative bacteria and to a lesser extent against an enveloped virus. The protein is Neutrophil antibiotic peptide NP-2 (Defa) of Rattus norvegicus (Rat).